The primary structure comprises 394 residues: Alcohol dehydrogenase-like 3 (394 aa).

Positions 48, 50, 71, 101, 104, 107, 115, and 188 each coordinate Zn(2+). Positions 50 and 71 each coordinate an alcohol. Thr50 serves as a coordination point for NAD(+). NAD(+)-binding positions include Gly213 to Gly218, Asp237, Lys242, Thr283, Val306, Val306 to Ile308, Phe333, and Arg383.

It belongs to the zinc-containing alcohol dehydrogenase family. Class-III subfamily. In terms of assembly, homodimer. Zn(2+) serves as cofactor.

The protein resides in the cytoplasm. It carries out the reaction a primary alcohol + NAD(+) = an aldehyde + NADH + H(+). The enzyme catalyses a secondary alcohol + NAD(+) = a ketone + NADH + H(+). The chain is Alcohol dehydrogenase-like 3 from Arabidopsis thaliana (Mouse-ear cress).